Here is a 90-residue protein sequence, read N- to C-terminus: Small ribosomal subunit protein bS18 (90 aa).

Belongs to the bacterial ribosomal protein bS18 family. As to quaternary structure, part of the 30S ribosomal subunit. Forms a tight heterodimer with protein bS6.

In terms of biological role, binds as a heterodimer with protein bS6 to the central domain of the 16S rRNA, where it helps stabilize the platform of the 30S subunit. This is Small ribosomal subunit protein bS18 from Polynucleobacter asymbioticus (strain DSM 18221 / CIP 109841 / QLW-P1DMWA-1) (Polynucleobacter necessarius subsp. asymbioticus).